Reading from the N-terminus, the 203-residue chain is Tegument protein UL51 homolog (203 aa).

The S-palmitoyl cysteine; by host moiety is linked to residue Cys-4.

This sequence belongs to the herpesviridae UL51 family. In terms of assembly, oligomerizes. Interacts with U75; this interaction mediates U75 incorporation to virions. Phosphorylated. Post-translationally, palmitoylation is necessary for Golgi localization.

Its subcellular location is the virion tegument. The protein localises to the host cytoplasm. It is found in the host Golgi apparatus. Plays several roles during the time course of infection, including egress of virus particles from the perinuclear space and secondary envelopment of cytoplasmic capsids that bud into specific trans-Golgi network (TGN)-derived membranes. The polypeptide is Tegument protein UL51 homolog (U44) (Homo sapiens (Human)).